Reading from the N-terminus, the 221-residue chain is Ribosomal RNA small subunit methyltransferase Nep1 (221 aa).

S-adenosyl-L-methionine contacts are provided by residues Gly174, Gly179, and 196 to 201 (IGNVSL).

The protein belongs to the class IV-like SAM-binding methyltransferase superfamily. RNA methyltransferase NEP1 family. Homodimer.

The enzyme catalyses a pseudouridine in rRNA + S-adenosyl-L-methionine = an N(1)-methylpseudouridine in rRNA + S-adenosyl-L-homocysteine + H(+). In terms of biological role, methyltransferase involved in ribosomal biogenesis. Specifically catalyzes the N1-methylation of the pseudouridine corresponding to position 914 in M.jannaschii 16S rRNA. This Pyrobaculum calidifontis (strain DSM 21063 / JCM 11548 / VA1) protein is Ribosomal RNA small subunit methyltransferase Nep1.